Consider the following 94-residue polypeptide: Pyrimidine/purine nucleoside phosphorylase (94 aa).

Belongs to the nucleoside phosphorylase PpnP family.

It carries out the reaction a purine D-ribonucleoside + phosphate = a purine nucleobase + alpha-D-ribose 1-phosphate. The enzyme catalyses adenosine + phosphate = alpha-D-ribose 1-phosphate + adenine. It catalyses the reaction cytidine + phosphate = cytosine + alpha-D-ribose 1-phosphate. The catalysed reaction is guanosine + phosphate = alpha-D-ribose 1-phosphate + guanine. It carries out the reaction inosine + phosphate = alpha-D-ribose 1-phosphate + hypoxanthine. The enzyme catalyses thymidine + phosphate = 2-deoxy-alpha-D-ribose 1-phosphate + thymine. It catalyses the reaction uridine + phosphate = alpha-D-ribose 1-phosphate + uracil. The catalysed reaction is xanthosine + phosphate = alpha-D-ribose 1-phosphate + xanthine. Catalyzes the phosphorolysis of diverse nucleosides, yielding D-ribose 1-phosphate and the respective free bases. Can use uridine, adenosine, guanosine, cytidine, thymidine, inosine and xanthosine as substrates. Also catalyzes the reverse reactions. The polypeptide is Pyrimidine/purine nucleoside phosphorylase (Aeromonas hydrophila subsp. hydrophila (strain ATCC 7966 / DSM 30187 / BCRC 13018 / CCUG 14551 / JCM 1027 / KCTC 2358 / NCIMB 9240 / NCTC 8049)).